The primary structure comprises 82 residues: MAKKKLENLSFEESLNELDTIVQSLEQGELSLEESMTLFERGLNLSQLSQVKLQAAEQKVQILLDKNGTAKLTDFDSSAGES.

The protein belongs to the XseB family. Heterooligomer composed of large and small subunits.

The protein resides in the cytoplasm. It catalyses the reaction Exonucleolytic cleavage in either 5'- to 3'- or 3'- to 5'-direction to yield nucleoside 5'-phosphates.. Functionally, bidirectionally degrades single-stranded DNA into large acid-insoluble oligonucleotides, which are then degraded further into small acid-soluble oligonucleotides. The chain is Exodeoxyribonuclease 7 small subunit from Colwellia psychrerythraea (strain 34H / ATCC BAA-681) (Vibrio psychroerythus).